We begin with the raw amino-acid sequence, 233 residues long: DNA repair protein RecO (233 aa).

Belongs to the RecO family.

Its function is as follows. Involved in DNA repair and RecF pathway recombination. This chain is DNA repair protein RecO, found in Pseudomonas aeruginosa (strain LESB58).